The following is an 864-amino-acid chain: DNA mismatch repair protein MutS (864 aa).

ATP is bound at residue 613 to 620 (GPNMGGKS).

Belongs to the DNA mismatch repair MutS family.

This protein is involved in the repair of mismatches in DNA. It is possible that it carries out the mismatch recognition step. This protein has a weak ATPase activity. The sequence is that of DNA mismatch repair protein MutS from Actinobacillus pleuropneumoniae serotype 3 (strain JL03).